A 913-amino-acid polypeptide reads, in one-letter code: Alanine--tRNA ligase (913 aa).

Residues H600, H604, C703, and H707 each contribute to the Zn(2+) site.

The protein belongs to the class-II aminoacyl-tRNA synthetase family. Requires Zn(2+) as cofactor.

It is found in the cytoplasm. The enzyme catalyses tRNA(Ala) + L-alanine + ATP = L-alanyl-tRNA(Ala) + AMP + diphosphate. In terms of biological role, catalyzes the attachment of alanine to tRNA(Ala) in a two-step reaction: alanine is first activated by ATP to form Ala-AMP and then transferred to the acceptor end of tRNA(Ala). Also edits incorrectly charged Ser-tRNA(Ala) and Gly-tRNA(Ala) via its editing domain. In Methanothrix thermoacetophila (strain DSM 6194 / JCM 14653 / NBRC 101360 / PT) (Methanosaeta thermophila), this protein is Alanine--tRNA ligase.